Here is a 368-residue protein sequence, read N- to C-terminus: Quinolinate synthase (368 aa).

Iminosuccinate is bound by residues His46 and Ser63. Cys110 lines the [4Fe-4S] cluster pocket. Iminosuccinate is bound by residues 141–143 (YVN) and Ser162. Residue Cys230 participates in [4Fe-4S] cluster binding. Iminosuccinate is bound by residues 256 to 258 (HPE) and Thr273. Position 320 (Cys320) interacts with [4Fe-4S] cluster.

This sequence belongs to the quinolinate synthase family. Type 3 subfamily. It depends on [4Fe-4S] cluster as a cofactor.

The protein resides in the cytoplasm. It catalyses the reaction iminosuccinate + dihydroxyacetone phosphate = quinolinate + phosphate + 2 H2O + H(+). The protein operates within cofactor biosynthesis; NAD(+) biosynthesis; quinolinate from iminoaspartate: step 1/1. Its function is as follows. Catalyzes the condensation of iminoaspartate with dihydroxyacetone phosphate to form quinolinate. This Bacillus cytotoxicus (strain DSM 22905 / CIP 110041 / 391-98 / NVH 391-98) protein is Quinolinate synthase.